A 510-amino-acid chain; its full sequence is MDSKTTFLTFLLCIFIFSHFSPSTSKSLTEKPLSFSPSASLPTLTAERLIKGFNLMPTRDVNVIDEEGSEAPRLVERAFDLPAAVDRRGSGGSPSVQDFGHHAGYYKLPNSKAARMFYFFFESRTNKADPVVIWLTGGPGCSSELALFYENGPFTVSNNSSLSWNEFGWDKASNLIYVDQPVGTGFSYTSDQSDLRHDEDGVSNDLYDFLQAFFKEHPQFVKNDFYITGESYAGHYIPALASRVHRGNKNKEGTHINLKGFAIGNGLTNPEIQYGAYADYALDMNLITQSDHDNLNRYYATCQQSIKECSADGGEGDACASSYTVCNNIFQKIMDIAGNVNYYDVRKQCEGSLCYDFSNMENFLNQKSVRKALGVGDIEFVSCSTAVYEAMQMDWMRNLEVGIPALLQDGIKLLVYAGEYDLICNWLGNSKWVHEMEWSGQKEFVAAATVPFHVDNKEAGLMKNYGSLTFLKVHDAGHMVPMDQPKAALQMLQNWMQGKLSTPTGRTAHQ.

The N-terminal stretch at 1-25 is a signal peptide; it reads MDSKTTFLTFLLCIFIFSHFSPSTS. Intrachain disulfides connect cysteine 141–cysteine 383, cysteine 309–cysteine 326, and cysteine 349–cysteine 354. Asparagine 158 and asparagine 159 each carry an N-linked (GlcNAc...) asparagine glycan. Serine 231 is an active-site residue. Residues aspartate 421 and histidine 478 contribute to the active site.

The protein belongs to the peptidase S10 family. Ubiquitous.

It is found in the secreted. Functionally, probable carboxypeptidase. This Arabidopsis thaliana (Mouse-ear cress) protein is Serine carboxypeptidase-like 48 (SCPL48).